The primary structure comprises 298 residues: MAEFMEPNLVSNFDDEKSNSVDTRSIFQMGFPLESEEIVREMIEKERQHSPRDDYLKRLRNGDLDFNVRIQALGWIWKACEELQFGPLCICLAMNYLDRFLSVHDLPSGKAWTVQLLAVACLSLAAKIEETNVPELMQLQVGAPMFVFEAKSVQRMELLVLNVLRWRLRAVTPCSYVRYFLSKINGYDQEPHSRLVTRSLQVIASTTKGIDFLEFRASEIAAAVALSVSGEHFDKFSFSSSFSSLEKERVKKIGEMIERDGSSSSSQTPNNTVLQFKSRRYSHSLSTASVSSSLTSLS.

This sequence belongs to the cyclin family. Cyclin D subfamily. As to quaternary structure, interacts with CDKA-1 to form a kinase complex.

May promote cell division. The sequence is that of Cyclin-D4-2 (CYCD4-2) from Arabidopsis thaliana (Mouse-ear cress).